A 394-amino-acid polypeptide reads, in one-letter code: RAB6A-GEF complex partner protein 2 (394 aa).

It belongs to the RGP1 family. As to quaternary structure, forms a complex with RIC1; the interaction enhances RAB6A GTPase activity. Interacts with RIC1. Interacts with RAB6A; the interaction is direct with a preference for RAB6A-GDP. Interacts with RAB33B.

Its subcellular location is the cytoplasm. The protein localises to the cytosol. The protein resides in the membrane. In terms of biological role, the RIC1-RGP1 complex acts as a guanine nucleotide exchange factor (GEF), which activates RAB6A by exchanging bound GDP for free GTP and may thereby required for efficient fusion of endosome-derived vesicles with the Golgi compartment. The RIC1-RGP1 complex participates in the recycling of mannose-6-phosphate receptors. The protein is RAB6A-GEF complex partner protein 2 of Bos taurus (Bovine).